The chain runs to 595 residues: Elongation factor 4 (595 aa).

Residues 2-184 enclose the tr-type G domain; sequence SHIRNFSIIA…RLVATIPAPT (183 aa). GTP contacts are provided by residues 14-19 and 131-134; these read DHGKST and NKMD.

The protein belongs to the TRAFAC class translation factor GTPase superfamily. Classic translation factor GTPase family. LepA subfamily.

The protein resides in the cell inner membrane. It catalyses the reaction GTP + H2O = GDP + phosphate + H(+). Its function is as follows. Required for accurate and efficient protein synthesis under certain stress conditions. May act as a fidelity factor of the translation reaction, by catalyzing a one-codon backward translocation of tRNAs on improperly translocated ribosomes. Back-translocation proceeds from a post-translocation (POST) complex to a pre-translocation (PRE) complex, thus giving elongation factor G a second chance to translocate the tRNAs correctly. Binds to ribosomes in a GTP-dependent manner. The protein is Elongation factor 4 of Pseudomonas savastanoi pv. phaseolicola (strain 1448A / Race 6) (Pseudomonas syringae pv. phaseolicola (strain 1448A / Race 6)).